We begin with the raw amino-acid sequence, 192 residues long: Protein ORF45 (192 aa).

Functionally, plays a role in the expression of ORF41, which itself is required for late gene expression. This chain is Protein ORF45, found in Autographa californica nuclear polyhedrosis virus (AcMNPV).